The chain runs to 252 residues: 3-deoxy-manno-octulosonate cytidylyltransferase (252 aa).

Belongs to the KdsB family.

The protein resides in the cytoplasm. The enzyme catalyses 3-deoxy-alpha-D-manno-oct-2-ulosonate + CTP = CMP-3-deoxy-beta-D-manno-octulosonate + diphosphate. Its pathway is nucleotide-sugar biosynthesis; CMP-3-deoxy-D-manno-octulosonate biosynthesis; CMP-3-deoxy-D-manno-octulosonate from 3-deoxy-D-manno-octulosonate and CTP: step 1/1. It functions in the pathway bacterial outer membrane biogenesis; lipopolysaccharide biosynthesis. Its function is as follows. Activates KDO (a required 8-carbon sugar) for incorporation into bacterial lipopolysaccharide in Gram-negative bacteria. This Nitratidesulfovibrio vulgaris (strain DP4) (Desulfovibrio vulgaris) protein is 3-deoxy-manno-octulosonate cytidylyltransferase.